Consider the following 493-residue polypeptide: Probable cytosol aminopeptidase (493 aa).

Residues Lys260 and Asp265 each contribute to the Mn(2+) site. Residue Lys272 is part of the active site. Mn(2+)-binding residues include Asp284, Asp343, and Glu345. Residue Arg347 is part of the active site.

This sequence belongs to the peptidase M17 family. It depends on Mn(2+) as a cofactor.

It localises to the cytoplasm. It carries out the reaction Release of an N-terminal amino acid, Xaa-|-Yaa-, in which Xaa is preferably Leu, but may be other amino acids including Pro although not Arg or Lys, and Yaa may be Pro. Amino acid amides and methyl esters are also readily hydrolyzed, but rates on arylamides are exceedingly low.. It catalyses the reaction Release of an N-terminal amino acid, preferentially leucine, but not glutamic or aspartic acids.. Its function is as follows. Presumably involved in the processing and regular turnover of intracellular proteins. Catalyzes the removal of unsubstituted N-terminal amino acids from various peptides. The sequence is that of Probable cytosol aminopeptidase from Nostoc punctiforme (strain ATCC 29133 / PCC 73102).